We begin with the raw amino-acid sequence, 312 residues long: DNA-directed RNA polymerase subunit alpha (312 aa).

An alpha N-terminal domain (alpha-NTD) region spans residues 1-229; sequence MLQYQIDRIE…ELFQPLATVT (229 aa). Residues 236–312 form an alpha C-terminal domain (alpha-CTD) region; the sequence is IEPEPSAEAQ…ISIPQSRTSV (77 aa).

The protein belongs to the RNA polymerase alpha chain family. In terms of assembly, in cyanobacteria the RNAP catalytic core is composed of 2 alpha, 1 beta, 1 beta', 1 gamma and 1 omega subunit. When a sigma factor is associated with the core the holoenzyme is formed, which can initiate transcription.

The catalysed reaction is RNA(n) + a ribonucleoside 5'-triphosphate = RNA(n+1) + diphosphate. DNA-dependent RNA polymerase catalyzes the transcription of DNA into RNA using the four ribonucleoside triphosphates as substrates. This Synechococcus sp. (strain CC9311) protein is DNA-directed RNA polymerase subunit alpha.